We begin with the raw amino-acid sequence, 410 residues long: 2-oxoglutarate-dependent dioxygenase AOP3 (410 aa).

Residues 258 to 355 (GNASVGAKEA…RYAAALFSYP (98 aa)) enclose the Fe2OG dioxygenase domain. 3 residues coordinate Fe cation: His-278, Asp-280, and His-335. Residue Arg-346 coordinates 2-oxoglutarate.

It belongs to the iron/ascorbate-dependent oxidoreductase family. The cofactor is Fe(2+).

Functionally, 2-oxoglutarate-dependent dioxygenase involved in glucosinolates biosynthesis. Catalyzes the conversion of methylsulfinylalkyl glucosinolates to hydroxyalkyl glucosinolates. The protein is 2-oxoglutarate-dependent dioxygenase AOP3 (AOP3) of Arabidopsis thaliana (Mouse-ear cress).